The primary structure comprises 437 residues: tRNA-2-methylthio-N(6)-dimethylallyladenosine synthase (437 aa).

Residues 1–115 enclose the MTTase N-terminal domain; that stretch reads MKVYIETMGC…ISQVIHKEKA (115 aa). Residues Cys-10, Cys-46, Cys-78, Cys-148, Cys-152, and Cys-155 each contribute to the [4Fe-4S] cluster site. A Radical SAM core domain is found at 134–367; sequence KKAQIRSLLN…QNRHKEILEE (234 aa). The region spanning 370-436 is the TRAM domain; sequence KLEVGKTHVV…KGRLMAATKG (67 aa).

The protein belongs to the methylthiotransferase family. MiaB subfamily. As to quaternary structure, monomer. It depends on [4Fe-4S] cluster as a cofactor.

Its subcellular location is the cytoplasm. The catalysed reaction is N(6)-dimethylallyladenosine(37) in tRNA + (sulfur carrier)-SH + AH2 + 2 S-adenosyl-L-methionine = 2-methylsulfanyl-N(6)-dimethylallyladenosine(37) in tRNA + (sulfur carrier)-H + 5'-deoxyadenosine + L-methionine + A + S-adenosyl-L-homocysteine + 2 H(+). Catalyzes the methylthiolation of N6-(dimethylallyl)adenosine (i(6)A), leading to the formation of 2-methylthio-N6-(dimethylallyl)adenosine (ms(2)i(6)A) at position 37 in tRNAs that read codons beginning with uridine. The chain is tRNA-2-methylthio-N(6)-dimethylallyladenosine synthase from Helicobacter pylori (strain ATCC 700392 / 26695) (Campylobacter pylori).